Here is a 76-residue protein sequence, read N- to C-terminus: MAKCTLTSLILLLIVLVLIQESHIVEGRPLKSSRISNVSKKFAAGNSNLSSKLTTEDHSLDAFRPTNPGNSPGIGH.

Residues 1-27 form the signal peptide; the sequence is MAKCTLTSLILLLIVLVLIQESHIVEG. Positions 28–61 are excised as a propeptide; it reads RPLKSSRISNVSKKFAAGNSNLSSKLTTEDHSLD. N37 and N48 each carry an N-linked (GlcNAc...) asparagine glycan. Residues 49-76 are disordered; that stretch reads LSSKLTTEDHSLDAFRPTNPGNSPGIGH. 3 positions are modified to hydroxyproline: P65, P68, and P72.

This sequence belongs to the C-terminally encoded plant signaling peptide (CEP) family. As to quaternary structure, interacts with CEP receptors (e.g. CEPR1 and CEPR2). Post-translationally, the mature small signaling peptide is generated by proteolytic processing of the longer precursor.

The protein localises to the secreted. The protein resides in the extracellular space. Its subcellular location is the apoplast. Its function is as follows. Extracellular signaling peptide that may regulate primary root growth rate and systemic nitrogen (N)-demand signaling. Mediates up-regulation of genes involved in N uptake and assimilation pathways. In Arabidopsis thaliana (Mouse-ear cress), this protein is Precursor of CEP7.